The chain runs to 305 residues: MLKNRSVVSIEDVDIDDLNDLFDLSDSMLKTIEKGGSTDLLRNRIMATLFYEPSTRTRLSFESAMHRLGGSVITVSDVKTSSVAKGETLADTIRMASSYSDIIVIRHPLEGAARLASKFANKPVINAGDGSGQHPTQTILDLYTIKRETGSIDGKTITMVGDLRYGRTIHSLIIALSRFDVRINLVSPQILKLPEYVLTKIGDRSRIMEYDDLSKVIEDTDVLYVTRIQKERFSDQNEYQSVIGSYSVDRDLVSRMKKDAIIMHPLPRIDEIKPEVDELPQARYFKQAYYGVPVRMALIYRILGD.

Arginine 56 and threonine 57 together coordinate carbamoyl phosphate. Lysine 85 is an L-aspartate binding site. The carbamoyl phosphate site is built by arginine 106, histidine 134, and glutamine 137. The L-aspartate site is built by arginine 167 and arginine 227. Residues leucine 266 and proline 267 each contribute to the carbamoyl phosphate site.

It belongs to the aspartate/ornithine carbamoyltransferase superfamily. ATCase family. Heterooligomer of catalytic and regulatory chains.

The enzyme catalyses carbamoyl phosphate + L-aspartate = N-carbamoyl-L-aspartate + phosphate + H(+). It functions in the pathway pyrimidine metabolism; UMP biosynthesis via de novo pathway; (S)-dihydroorotate from bicarbonate: step 2/3. Functionally, catalyzes the condensation of carbamoyl phosphate and aspartate to form carbamoyl aspartate and inorganic phosphate, the committed step in the de novo pyrimidine nucleotide biosynthesis pathway. In Thermoplasma acidophilum (strain ATCC 25905 / DSM 1728 / JCM 9062 / NBRC 15155 / AMRC-C165), this protein is Aspartate carbamoyltransferase catalytic subunit.